The chain runs to 294 residues: Cytidine deaminase (294 aa).

CMP/dCMP-type deaminase domains lie at 48-168 (DDDA…FGPK) and 187-294 (ALTD…RITF). 89-91 (NME) is a binding site for substrate. His-102 contacts Zn(2+). The active-site Proton donor is the Glu-104. Zn(2+) contacts are provided by Cys-129 and Cys-132.

It belongs to the cytidine and deoxycytidylate deaminase family. In terms of assembly, homodimer. Zn(2+) serves as cofactor.

It catalyses the reaction cytidine + H2O + H(+) = uridine + NH4(+). It carries out the reaction 2'-deoxycytidine + H2O + H(+) = 2'-deoxyuridine + NH4(+). Functionally, this enzyme scavenges exogenous and endogenous cytidine and 2'-deoxycytidine for UMP synthesis. This is Cytidine deaminase from Serratia proteamaculans (strain 568).